The following is a 122-amino-acid chain: UPF0102 protein CPF_1959 (122 aa).

The protein belongs to the UPF0102 family.

This is UPF0102 protein CPF_1959 from Clostridium perfringens (strain ATCC 13124 / DSM 756 / JCM 1290 / NCIMB 6125 / NCTC 8237 / Type A).